A 456-amino-acid polypeptide reads, in one-letter code: MLPSQSPAIFTVSRLNQTVRLLLEHEMGQVWISGEISNFTQPASGHWYFTLKDDTAQVRCAMFRNSNRRVTFRPQHGQQVLVRANITLYEPRGDYQIIVESMQPAGEGLLQQKYEQLKAKLQAEGLFDLQYKKPLPSPAHCVGVITSKTGAALHDILHVLKRRDPSLPVIIYPTAVQGDDAPGQIVRAIELANQRNECDVLIVGRGGGSLEDLWSFNDERVAQAIFASRIPVVSAVGHETDVTIADFVADLRAPTPSAAAEVVSRNQQELLRQVQSTRQRLEMAMDYYLANRTRRFTQIHHRLQQQHPQLRLARQQTMLERLQKRMSFALENQLKRAGQQQQRLTQRLNQQNPQPKIHRAQTRIQQLEYRLAETLRAQLSATRERFGNAVTHLEAVSPLSTLARGYSVTTATDGKVLKKVKQVKAGEMLTTRLEDGWVESEVKNIQPIKKSRKKVH.

This sequence belongs to the XseA family. Heterooligomer composed of large and small subunits.

Its subcellular location is the cytoplasm. It catalyses the reaction Exonucleolytic cleavage in either 5'- to 3'- or 3'- to 5'-direction to yield nucleoside 5'-phosphates.. Functionally, bidirectionally degrades single-stranded DNA into large acid-insoluble oligonucleotides, which are then degraded further into small acid-soluble oligonucleotides. In Shigella dysenteriae serotype 1 (strain Sd197), this protein is Exodeoxyribonuclease 7 large subunit.